Reading from the N-terminus, the 416-residue chain is Enterobactin exporter EntS (416 aa).

Residues 1–21 (MNKQSWLLNLSLLKTHPAFRA) lie on the Cytoplasmic side of the membrane. The helical transmembrane segment at 22 to 42 (VFLARFISIVSLGLLGVAVPV) threads the bilayer. At 43–55 (QIQMMTHSTWQVG) the chain is on the periplasmic side. A helical transmembrane segment spans residues 56–76 (LSVTLTGGAMFVGLMVGGVLA). Residues 77–83 (DRYERKK) are Cytoplasmic-facing. The chain crosses the membrane as a helical span at residues 84-104 (VILLARGTCGIGFIGLCLNAL). At 105–109 (LPEPS) the chain is on the periplasmic side. Residues 110–130 (LLAIYLLGLWDGFFASLGVTA) traverse the membrane as a helical segment. Over 131 to 156 (LLAATPALVGRENLMQAGAITMLTVR) the chain is Cytoplasmic. A helical membrane pass occupies residues 157–177 (LGSVISPMIGGLLLATGGVAW). A topological domain (periplasmic) is located at residue asparagine 178. The chain crosses the membrane as a helical span at residues 179 to 199 (YGLAAAGTFITLLPLLSLPAL). Over 200–218 (PPPPQPREHPLKSLLAGFR) the chain is Cytoplasmic. A helical transmembrane segment spans residues 219–239 (FLLASPLVGGIALLGGLLTMA). Over 240–256 (SAVRVLYPALADNWQMS) the chain is Periplasmic. Residues 257 to 277 (AAQIGFLYAAIPLGAAIGALT) form a helical membrane-spanning segment. Residues 278–287 (SGKLAHSARP) lie on the Cytoplasmic side of the membrane. Residues 288–307 (GLLMLLSTLGSFLAIGLFGL) form a helical membrane-spanning segment. The Periplasmic portion of the chain corresponds to 308–313 (MPMWIL). A helical transmembrane segment spans residues 314–336 (GVVCLALFGWLSAVSSLLQYTML). The Cytoplasmic segment spans residues 337–356 (QTQTPEAMLGRINGLWTAQN). Residues 357–377 (VTGDAIGAALLGGLGAMMTPV) traverse the membrane as a helical segment. Residue alanine 378 is a topological domain, periplasmic. A helical transmembrane segment spans residues 379-399 (SASASGFGLLIIGVLLLLVLV). The Cytoplasmic segment spans residues 400 to 416 (ELRHFRQTPPQVTASDS).

The protein belongs to the major facilitator superfamily. EntS (TC 2.A.1.38) family.

It is found in the cell inner membrane. Its function is as follows. Component of an export pathway for enterobactin. In Escherichia coli (strain K12 / MC4100 / BW2952), this protein is Enterobactin exporter EntS.